The following is a 193-amino-acid chain: Peptidyl-tRNA hydrolase (193 aa).

A tRNA-binding site is contributed by Tyr-15. Residue His-20 is the Proton acceptor of the active site. Residues Phe-65, Asn-67, and Asn-113 each contribute to the tRNA site.

The protein belongs to the PTH family. Monomer.

The protein resides in the cytoplasm. It carries out the reaction an N-acyl-L-alpha-aminoacyl-tRNA + H2O = an N-acyl-L-amino acid + a tRNA + H(+). Its function is as follows. Hydrolyzes ribosome-free peptidyl-tRNAs (with 1 or more amino acids incorporated), which drop off the ribosome during protein synthesis, or as a result of ribosome stalling. Catalyzes the release of premature peptidyl moieties from peptidyl-tRNA molecules trapped in stalled 50S ribosomal subunits, and thus maintains levels of free tRNAs and 50S ribosomes. The chain is Peptidyl-tRNA hydrolase from Ehrlichia canis (strain Jake).